A 204-amino-acid polypeptide reads, in one-letter code: uncharacterized protein (204 aa).

The helical transmembrane segment at 160-180 (GLTVAAIASVVVAGAVTYLVV) threads the bilayer.

It to M.pneumoniae MPN_373 C-terminal region.

It localises to the cell membrane. This is an uncharacterized protein from Mycoplasma pneumoniae (strain ATCC 29342 / M129 / Subtype 1) (Mycoplasmoides pneumoniae).